We begin with the raw amino-acid sequence, 347 residues long: 4-hydroxy-2-oxovalerate aldolase 2 (347 aa).

Residues 9-259 enclose the Pyruvate carboxyltransferase domain; that stretch reads ITIVDTTLRD…DTGVDLFPLI (251 aa). Substrate is bound by residues 17–18, serine 171, and histidine 198; that span reads RD. Aspartate 18 serves as a coordination point for Mn(2+). Mn(2+)-binding residues include histidine 198 and histidine 200. Tyrosine 289 contributes to the substrate binding site.

This sequence belongs to the 4-hydroxy-2-oxovalerate aldolase family.

The enzyme catalyses (S)-4-hydroxy-2-oxopentanoate = acetaldehyde + pyruvate. The protein is 4-hydroxy-2-oxovalerate aldolase 2 of Rhodococcus opacus (strain B4).